Here is a 129-residue protein sequence, read N- to C-terminus: Small ribosomal subunit protein uS11 (129 aa).

It belongs to the universal ribosomal protein uS11 family. Part of the 30S ribosomal subunit. Interacts with proteins S7 and S18. Binds to IF-3.

Located on the platform of the 30S subunit, it bridges several disparate RNA helices of the 16S rRNA. Forms part of the Shine-Dalgarno cleft in the 70S ribosome. This Hamiltonella defensa subsp. Acyrthosiphon pisum (strain 5AT) protein is Small ribosomal subunit protein uS11.